Reading from the N-terminus, the 381-residue chain is Periphilin-1 (381 aa).

Composition is skewed to basic and acidic residues over residues 1-28, 39-65, and 79-121; these read MWSEGRYDYDRLPRERVPPRSHPSDGYH, PLLDKRPPLLDKRPPLLARPDEGGYSR, and RSFS…DGFR. Disordered stretches follow at residues 1–65 and 79–260; these read MWSE…GYSR and RSFS…KSDE. A Nuclear localization signal motif is present at residues 117–123; that stretch reads RDGFRRK. K123 is covalently cross-linked (Glycyl lysine isopeptide (Lys-Gly) (interchain with G-Cter in SUMO2)). A phosphoserine mark is found at S124, S128, S147, and S154. Positions 130 to 156 are enriched in basic and acidic residues; that stretch reads YSRDRSPHKRDAPFFRESPVGRKDSPH. A compositionally biased stretch (low complexity) spans 157 to 168; it reads SRSGSSVSSRSY. Over residues 175–187 the composition is skewed to basic residues; it reads THSFHQSQHRKSS. S181 is subject to Phosphoserine. A Glycyl lysine isopeptide (Lys-Gly) (interchain with G-Cter in SUMO2) cross-link involves residue K194. Basic and acidic residues predominate over residues 195 to 208; it reads RQNEAIRGRGKERS. S211 carries the phosphoserine modification. A Glycyl lysine isopeptide (Lys-Gly) (interchain with G-Cter in SUMO2) cross-link involves residue K213. 2 positions are modified to phosphoserine: S215 and S219. Over residues 217-230 the composition is skewed to low complexity; sequence DASPSSSSAVASSK. Residues 231–260 show a composition bias toward basic and acidic residues; that stretch reads ALDKPSRLTEKELAEAESKWANETLEKSDE. A Glycyl lysine isopeptide (Lys-Gly) (interchain with G-Cter in SUMO2) cross-link involves residue K241. K249 bears the N6-acetyllysine; alternate mark. K249 is covalently cross-linked (Glycyl lysine isopeptide (Lys-Gly) (interchain with G-Cter in SUMO2); alternate). S339 bears the Phosphoserine mark. Residue K342 forms a Glycyl lysine isopeptide (Lys-Gly) (interchain with G-Cter in SUMO2) linkage.

Homodimer. Component of the HUSH complex; at least composed of TASOR, PPHLN1 and MPHOSPH8. Interacts with SIN3A and HDAC1. May interact with PPL. Ubiquitously expressed. Strong expression in the developing somites and limbs, the embryonic nervous system and the adult brain.

It localises to the nucleus. It is found in the cytoplasm. The protein resides in the chromosome. Component of the HUSH complex, a multiprotein complex that mediates epigenetic repression. The HUSH complex is recruited to genomic loci rich in H3K9me3 and is probably required to maintain transcriptional silencing by promoting recruitment of SETDB1, a histone methyltransferase that mediates further deposition of H3K9me3. In the HUSH complex, contributes to the maintenance of the complex at chromatin. Acts as a transcriptional corepressor and regulates the cell cycle, probably via the HUSH complex. The HUSH complex is also involved in the silencing of unintegrated retroviral DNA: some part of the retroviral DNA formed immediately after infection remains unintegrated in the host genome and is transcriptionally repressed. May be involved in epithelial differentiation by contributing to epidermal integrity and barrier formation. The polypeptide is Periphilin-1 (Mus musculus (Mouse)).